The primary structure comprises 406 residues: Probable sphingosine-1-phosphate phosphatase (406 aa).

The next 2 helical transmembrane spans lie at 66-86 (ILGE…CVAT) and 92-112 (LCVV…TFTL). Positions 107–115 (KNTFTLPRP) are phosphatase sequence motif I. A phosphatase sequence motif II region spans residues 133 to 136 (PSTH). Histidine 136 (proton donor) is an active-site residue. 2 helical membrane passes run 138-158 (ASAF…FPTI) and 162-182 (FNIS…SVMF). The segment at 183 to 194 (SRLYNGHHTPMD) is phosphatase sequence motif III. Residue histidine 190 is the Nucleophile of the active site. A run of 5 helical transmembrane segments spans residues 193–213 (MDVI…TYQL), 225–245 (TFLF…FFHP), 254–274 (AYPE…SLWL), 313–333 (ILIG…FFFF), and 374–394 (LFVY…FYYL).

Belongs to the type 2 lipid phosphate phosphatase family.

It localises to the endoplasmic reticulum membrane. In terms of biological role, has enzymatic activity against both sphingosine 1 phosphate (S1P) and dihydro-S1P. Regulates intracellular and extracellular S1P levels. The chain is Probable sphingosine-1-phosphate phosphatase (sppA) from Dictyostelium discoideum (Social amoeba).